We begin with the raw amino-acid sequence, 129 residues long: Small ribosomal subunit protein uS11 (129 aa).

This sequence belongs to the universal ribosomal protein uS11 family. In terms of assembly, part of the 30S ribosomal subunit. Interacts with proteins S7 and S18. Binds to IF-3.

Its function is as follows. Located on the platform of the 30S subunit, it bridges several disparate RNA helices of the 16S rRNA. Forms part of the Shine-Dalgarno cleft in the 70S ribosome. The sequence is that of Small ribosomal subunit protein uS11 from Limosilactobacillus fermentum (strain NBRC 3956 / LMG 18251) (Lactobacillus fermentum).